Here is a 453-residue protein sequence, read N- to C-terminus: Probable tRNA methyltransferase 9B (453 aa).

A Phosphoserine modification is found at serine 214.

Belongs to the methyltransferase superfamily.

May modify wobble uridines in specific arginine and glutamic acid tRNAs. Acts as a tumor suppressor by promoting the expression of LIN9. The sequence is that of Probable tRNA methyltransferase 9B (TRMT9B) from Bos taurus (Bovine).